The primary structure comprises 445 residues: Alpha/beta hydrolase psoB (445 aa).

S246 serves as the catalytic Nucleophile.

Belongs to the AB hydrolase superfamily. FUS2 hydrolase family. In terms of assembly, homodimer.

Its pathway is secondary metabolite biosynthesis. In terms of biological role, alpha/beta hydrolase; part of the gene cluster that mediates the biosynthesis of pseurotin A, a competitive inhibitor of chitin synthase and an inducer of nerve-cell proliferation. The PKS-NRPS hybrid synthetase psoA is responsible for the biosynthesis of azaspirene, one of the first intermediates having the 1-oxa-7-azaspiro[4,4]-non-2-ene-4,6-dione core of pseurotin, via condensation of one acetyl-CoA, 4 malonyl-CoA, and a L-phenylalanine molecule. The dual-functional monooxygenase/methyltransferase psoF seems to be involved in the addition of the C3 methyl group onto the pseurotin scaffold. Azaspirene is then converted to synerazol through 4 steps including oxidation of C17 by the cytochrome P450 monooxygenase psoD, O-methylation of the hydroxy group of C8 by the methyltransferase psoC, and the trans-to-cis isomerization of the C13 olefin by the glutathione S-transferase psoE. The fourth step of synerazol production is performed by the dual-functional monooxygenase/methyltransferase psoF which seems to catalyze the epoxidation of the intermediate deepoxy-synerazol. Synerazol can be attacked by a water molecule nonenzymatically at two different positions to yield two diol products, pseurotin A and pseurotin D. The protein is Alpha/beta hydrolase psoB of Aspergillus fumigatus (strain ATCC MYA-4609 / CBS 101355 / FGSC A1100 / Af293) (Neosartorya fumigata).